Reading from the N-terminus, the 143-residue chain is Ribosome-binding factor A (143 aa).

Positions 116-128 (SDDEAKQKQHGDQ) are enriched in basic and acidic residues. A disordered region spans residues 116–143 (SDDEAKQKQHGDQQDVSQSSDDKSEGED).

This sequence belongs to the RbfA family. Monomer. Binds 30S ribosomal subunits, but not 50S ribosomal subunits or 70S ribosomes.

The protein resides in the cytoplasm. One of several proteins that assist in the late maturation steps of the functional core of the 30S ribosomal subunit. Associates with free 30S ribosomal subunits (but not with 30S subunits that are part of 70S ribosomes or polysomes). Required for efficient processing of 16S rRNA. May interact with the 5'-terminal helix region of 16S rRNA. The polypeptide is Ribosome-binding factor A (Shewanella sediminis (strain HAW-EB3)).